Reading from the N-terminus, the 423-residue chain is ATP-citrate synthase alpha chain protein 2 (423 aa).

3 residues coordinate citrate: Asn343, Thr345, and Arg376.

Belongs to the succinate/malate CoA ligase beta subunit family. As to quaternary structure, heterooctamer of 4 alpha and 4 beta chains.

The protein localises to the cytoplasm. It is found in the cytosol. It catalyses the reaction oxaloacetate + acetyl-CoA + ADP + phosphate = citrate + ATP + CoA. Its function is as follows. ATP citrate-lyase is the primary enzyme responsible for the synthesis of cytosolic acetyl-CoA, used for the elongation of fatty acids and biosynthesis of isoprenoids, flavonoids and malonated derivatives. May supply substrate to the cytosolic acetyl-CoA carboxylase, which generates the malonyl-CoA used for the synthesis of a multitude of compounds, including very long chain fatty acids and flavonoids. In contrast to all known animal ACL enzymes having a homomeric structure, plant ACLs are composed of alpha and beta chains. This is ATP-citrate synthase alpha chain protein 2 (ACLA-2) from Oryza sativa subsp. japonica (Rice).